The sequence spans 150 residues: Transcriptional regulator MraZ (150 aa).

SpoVT-AbrB domains lie at 9–54 (QSIH…PPEE) and 83–126 (AEEC…NKST).

The protein belongs to the MraZ family. Forms oligomers.

It localises to the cytoplasm. It is found in the nucleoid. The sequence is that of Transcriptional regulator MraZ from Syntrophobacter fumaroxidans (strain DSM 10017 / MPOB).